A 2540-amino-acid chain; its full sequence is Probable JmjC domain-containing histone demethylation protein 2C (2540 aa).

Residues 278–309 (TRAQANSPRPAMNSQAAVPKQNTHQQQQQRSI) are compositionally biased toward polar residues. A disordered region spans residues 278–478 (TRAQANSPRP…TVSDHNSNDL (201 aa)). Phosphoserine occurs at positions 317 and 320. A compositionally biased stretch (basic and acidic residues) spans 323–342 (DEEKMKEEKYDYISRGENPK). Basic residues predominate over residues 343–353 (GKNKHLMNKRR). The span at 354-371 (KPEEDEKKLNMKRLRTDN) shows a compositional bias: basic and acidic residues. Residues Ser-373 and Ser-376 each carry the phosphoserine modification. Residues 373 to 382 (SDFSESSDSE) are compositionally biased toward low complexity. Basic and acidic residues-rich tracts occupy residues 383–403 (NSNK…ELKN), 410–427 (NGEE…EETL), and 438–452 (QEDK…RKSV). Residues 464–478 (SSEQSTVSDHNSNDL) are compositionally biased toward polar residues. Residues Ser-475 and Ser-501 each carry the phosphoserine modification. Thr-505 is subject to Phosphothreonine. Phosphoserine is present on residues Ser-601, Ser-617, Ser-638, Ser-639, Ser-641, Ser-652, and Ser-943. A disordered region spans residues 631–656 (VDTHKIKSSPSPEVVKPKITHSPDSV). Disordered stretches follow at residues 1242 to 1263 (GKVQ…SQAN) and 1614 to 1692 (NRRK…NSNT). Basic residues predominate over residues 1643–1652 (KRQPKPTYKK). The segment covering 1653–1669 (KQNDLQKRKGEIEEDLK) has biased composition (basic and acidic residues). The segment at 1846-1871 (CDACEATLFNIHWVCQKCGFVVCLDC) adopts a C6-type zinc-finger fold. Positions 1971–1991 (PESQQQNTPPKSEKNGGSSPE) are enriched in polar residues. The tract at residues 1971-2064 (PESQQQNTPP…LVSQNNEQGS (94 aa)) is disordered. Ser-1989 carries the phosphoserine modification. The span at 2016–2043 (AEQKAREEKKENKELTLENQIKEEREQD) shows a compositional bias: basic and acidic residues. Polar residues predominate over residues 2045-2064 (SESPNGRTSPLVSQNNEQGS). The LXXLL motif signature appears at 2066 to 2070 (LRDLL). Residues Lys-2132 and Lys-2136 each participate in a glycyl lysine isopeptide (Lys-Gly) (interchain with G-Cter in SUMO2) cross-link. The 225-residue stretch at 2274 to 2498 (MPARYEDLLK…ESFHLTQELR (225 aa)) folds into the JmjC domain. Residues His-2336, Glu-2338, and His-2466 each coordinate Fe cation.

Belongs to the JHDM2 histone demethylase family. In terms of assembly, interacts specifically with the ligand-binding domain of the thyroid receptor (TR). Requires the presence of thyroid hormone for its interaction. Fe(2+) is required as a cofactor.

It is found in the nucleus. Probable histone demethylase that specifically demethylates 'Lys-9' of histone H3, thereby playing a central role in histone code. Demethylation of Lys residue generates formaldehyde and succinate. May be involved in hormone-dependent transcriptional activation, by participating in recruitment to androgen-receptor target genes. The protein is Probable JmjC domain-containing histone demethylation protein 2C (JMJD1C) of Homo sapiens (Human).